A 203-amino-acid polypeptide reads, in one-letter code: MDYFPMIIALLFVAFQGAPETAVLGAELSPEAESQGETPSPHASWRPRRSKRCSCSSLMDKECVYFCHLDIIWVNTPEHIVPYGLGSPSRSRRSLKDLFPAKAADRRDRCQCASQKDKKCWSFCQAGKEIGRDQDTMEKRWDNQKKGTDCSKLGEKCIHRQLVMGRKIRRLEAISNSIKTSFHIAKLKAELYRDKKVTHNRTH.

Positions 1-25 (MDYFPMIIALLFVAFQGAPETAVLG) are cleaved as a signal peptide. Positions 26 to 50 (AELSPEAESQGETPSPHASWRPRRS) are excised as a propeptide. The tract at residues 27–48 (ELSPEAESQGETPSPHASWRPR) is disordered. Cystine bridges form between C53-C67 and C55-C63. The propeptide occupies 83 to 203 (YGLGSPSRSR…DKKVTHNRTH (121 aa)). The tract at residues 110–124 (CQCASQKDKKCWSFC) is endothelin-like. N200 carries N-linked (GlcNAc...) asparagine glycosylation.

This sequence belongs to the endothelin/sarafotoxin family.

It localises to the secreted. In terms of biological role, endothelins are endothelium-derived vasoconstrictor peptides. Probable ligand for G-protein coupled receptors EDNRA and EDNRB which activates PTK2B, BCAR1, BCAR3 and, GTPases RAP1 and RHOA cascade in glomerular mesangial cells. Also binds the DEAR/FBXW7-AS1 receptor. Promotes mesenteric arterial wall remodeling via activation of ROCK signaling and subsequent colocalization of NFATC3 with F-actin filaments. NFATC3 then translocates to the nucleus where it subsequently promotes the transcription of the smooth muscle hypertrophy and differentiation marker ACTA2. The sequence is that of Endothelin-1 (EDN1) from Sus scrofa (Pig).